The sequence spans 61 residues: Large ribosomal subunit protein uL30 (61 aa).

Belongs to the universal ribosomal protein uL30 family. In terms of assembly, part of the 50S ribosomal subunit.

In Chlorobium phaeobacteroides (strain DSM 266 / SMG 266 / 2430), this protein is Large ribosomal subunit protein uL30.